Consider the following 401-residue polypeptide: Argininosuccinate synthase (401 aa).

9-17 (AYSGGLDTS) serves as a coordination point for ATP. Y86 provides a ligand contact to L-citrulline. An ATP-binding site is contributed by G116. Residues T118, N122, and D123 each coordinate L-aspartate. An L-citrulline-binding site is contributed by N122. Residues R126, S174, S183, E259, and Y271 each coordinate L-citrulline.

It belongs to the argininosuccinate synthase family. Type 1 subfamily. As to quaternary structure, homotetramer.

Its subcellular location is the cytoplasm. It carries out the reaction L-citrulline + L-aspartate + ATP = 2-(N(omega)-L-arginino)succinate + AMP + diphosphate + H(+). It participates in amino-acid biosynthesis; L-arginine biosynthesis; L-arginine from L-ornithine and carbamoyl phosphate: step 2/3. In Bacillus anthracis (strain A0248), this protein is Argininosuccinate synthase.